Here is an 84-residue protein sequence, read N- to C-terminus: Exodeoxyribonuclease 7 small subunit (84 aa).

Belongs to the XseB family. As to quaternary structure, heterooligomer composed of large and small subunits.

Its subcellular location is the cytoplasm. The enzyme catalyses Exonucleolytic cleavage in either 5'- to 3'- or 3'- to 5'-direction to yield nucleoside 5'-phosphates.. Functionally, bidirectionally degrades single-stranded DNA into large acid-insoluble oligonucleotides, which are then degraded further into small acid-soluble oligonucleotides. The sequence is that of Exodeoxyribonuclease 7 small subunit from Bartonella quintana (strain Toulouse) (Rochalimaea quintana).